A 132-amino-acid chain; its full sequence is Small ribosomal subunit protein uS8 (132 aa).

Belongs to the universal ribosomal protein uS8 family. As to quaternary structure, part of the 30S ribosomal subunit. Contacts proteins S5 and S12.

Its function is as follows. One of the primary rRNA binding proteins, it binds directly to 16S rRNA central domain where it helps coordinate assembly of the platform of the 30S subunit. The sequence is that of Small ribosomal subunit protein uS8 from Anoxybacillus flavithermus (strain DSM 21510 / WK1).